The sequence spans 856 residues: MMEQYYEIKKQYPDAFLFYRVGDFYELFEEDAVKGAQILELTLTHRSNKTKNPIPMAGVPHMAVDTYVNTLVEKGYKVALCEQLEDPKKAKGMVKRGIIQLVTPGTMMSEGPNDAKDSNYLTSVVTTEKGFGVAYSDLSTGEVYATHLKSFEAVSNELLSLRTREVVYNGPLTEQNKEFMHKANITVSSPTPIEGEHAEISYVGQNLTNSAEKKATEQLVGYLLSTQKRSLAHLQVAKSYEVNQYLQMSHTVQNNLELVASAKTGKKMGSLFWVLDKTHTAMGGRLLKQWLARPLLNVDEINHREEMVQALFDGYFTRENAIDALKGVYDLERLTGRIAFGNVNARELLQLSRSLEAVPTILDALDQSDSDVLKEFAQKIDPLKGVAELITTTIVKDPPLLTTEGGLIREGVDKQLDRYRDAMNNGKKWLAQMEADERQKTGIENLKVGYNKVFGYYIQVSNGNKNKVPLDRYTRKQTLTNAERYITPELKEHENLILEAQTRSTDLEYDLFVRLREEVKKYIPALQKLGSQLAALDVFCGFASVAEQNNYCRPSFHTDNQDIDVVNGRHPVVEKVMTAGSYIPNSVEMDSSTNIYLITGPNMSGKSTYMRQMALIAIMAQVGSFVPADSADLPIFDQIFTRIGAADDLISGQSTFMVEMSEANDALQYATKRSLVLFDEIGRGTATYDGMALAGAIVKYLHDKVGAKAFFATHYHELTDLDETLDHLKNIHVGATEENGKLIFLHKILPGPADQSYGIHVAQLAGLPKSVLREATKLLKRLEAQGSEIAPASQQLDLFAQPEVNDSEEVQAEQAVITDTEQNILDDISNLYLADKTPLQIMQLVADWQKDLKDDK.

Residue 600 to 607 coordinates ATP; the sequence is GPNMSGKS.

This sequence belongs to the DNA mismatch repair MutS family.

Functionally, this protein is involved in the repair of mismatches in DNA. It is possible that it carries out the mismatch recognition step. This protein has a weak ATPase activity. The polypeptide is DNA mismatch repair protein MutS (Lactobacillus acidophilus (strain ATCC 700396 / NCK56 / N2 / NCFM)).